The primary structure comprises 145 residues: Fatty acid-binding protein homolog 4 (145 aa).

This sequence belongs to the calycin superfamily. Fatty-acid binding protein (FABP) family.

This chain is Fatty acid-binding protein homolog 4 (lbp-4), found in Caenorhabditis elegans.